The primary structure comprises 531 residues: O-phosphoserine--tRNA(Cys) ligase (531 aa).

Substrate contacts are provided by residues 189 to 191, 234 to 236, 276 to 277, and Asn-319; these read HMT, SAS, and YY.

This sequence belongs to the class-II aminoacyl-tRNA synthetase family. O-phosphoseryl-tRNA(Cys) synthetase subfamily. In terms of assembly, homotetramer. Interacts with SepCysS.

It carries out the reaction tRNA(Cys) + O-phospho-L-serine + ATP = O-phospho-L-seryl-tRNA(Cys) + AMP + diphosphate. Its function is as follows. Catalyzes the attachment of O-phosphoserine (Sep) to tRNA(Cys). The protein is O-phosphoserine--tRNA(Cys) ligase of Methanoculleus marisnigri (strain ATCC 35101 / DSM 1498 / JR1).